A 412-amino-acid polypeptide reads, in one-letter code: Tyrosine--tRNA ligase (412 aa).

Residues 56–65 (PSAPDVHIGH) carry the 'HIGH' region motif. Positions 240 to 244 (KMSKS) match the 'KMSKS' region motif. Lys243 serves as a coordination point for ATP. An S4 RNA-binding domain is found at 351–412 (VWIVDLLVTL…GKRKFKKLVR (62 aa)).

The protein belongs to the class-I aminoacyl-tRNA synthetase family. TyrS type 2 subfamily. In terms of assembly, homodimer.

The protein resides in the cytoplasm. The catalysed reaction is tRNA(Tyr) + L-tyrosine + ATP = L-tyrosyl-tRNA(Tyr) + AMP + diphosphate + H(+). Its function is as follows. Catalyzes the attachment of tyrosine to tRNA(Tyr) in a two-step reaction: tyrosine is first activated by ATP to form Tyr-AMP and then transferred to the acceptor end of tRNA(Tyr). This is Tyrosine--tRNA ligase from Halalkalibacterium halodurans (strain ATCC BAA-125 / DSM 18197 / FERM 7344 / JCM 9153 / C-125) (Bacillus halodurans).